The primary structure comprises 225 residues: PKHD-type hydroxylase YbiX (225 aa).

The 100-residue stretch at Thr78–Ser177 folds into the Fe2OG dioxygenase domain. His96, Asp98, and His158 together coordinate Fe cation. A 2-oxoglutarate-binding site is contributed by Arg168.

It depends on Fe(2+) as a cofactor. Requires L-ascorbate as cofactor.

In Escherichia coli (strain SMS-3-5 / SECEC), this protein is PKHD-type hydroxylase YbiX.